Reading from the N-terminus, the 370-residue chain is Homoserine O-acetyltransferase (370 aa).

The AB hydrolase-1 domain maps to 44-350; it reads NAILVAHAWT…AYGHDAFLLE (307 aa). Catalysis depends on serine 150, which acts as the Nucleophile. Substrate is bound at residue arginine 217. Active-site residues include aspartate 311 and histidine 344. Aspartate 345 lines the substrate pocket.

The protein belongs to the AB hydrolase superfamily. MetX family. Homodimer.

Its subcellular location is the cytoplasm. It carries out the reaction L-homoserine + acetyl-CoA = O-acetyl-L-homoserine + CoA. The protein operates within amino-acid biosynthesis; L-methionine biosynthesis via de novo pathway; O-acetyl-L-homoserine from L-homoserine: step 1/1. Transfers an acetyl group from acetyl-CoA to L-homoserine, forming acetyl-L-homoserine. This Geotalea uraniireducens (strain Rf4) (Geobacter uraniireducens) protein is Homoserine O-acetyltransferase.